The following is a 248-amino-acid chain: Phycocyanobilin:ferredoxin oxidoreductase (248 aa).

Belongs to the HY2 family.

The enzyme catalyses (2R,3Z)-phycocyanobilin + 4 oxidized [2Fe-2S]-[ferredoxin] = biliverdin IXalpha + 4 reduced [2Fe-2S]-[ferredoxin] + 4 H(+). Catalyzes the four-electron reduction of biliverdin IX-alpha (2-electron reduction at both the A and D rings); the reaction proceeds via an isolatable 2-electron intermediate, 181,182-dihydrobiliverdin. The protein is Phycocyanobilin:ferredoxin oxidoreductase (pcyA) of Synechocystis sp. (strain ATCC 27184 / PCC 6803 / Kazusa).